Consider the following 379-residue polypeptide: Succinyl-diaminopimelate desuccinylase (379 aa).

A Zn(2+)-binding site is contributed by His-70. The active site involves Asp-72. Residue Asp-103 participates in Zn(2+) binding. The active-site Proton acceptor is the Glu-137. Zn(2+)-binding residues include Glu-138, Glu-166, and His-352.

This sequence belongs to the peptidase M20A family. DapE subfamily. In terms of assembly, homodimer. Zn(2+) is required as a cofactor. It depends on Co(2+) as a cofactor.

It carries out the reaction N-succinyl-(2S,6S)-2,6-diaminopimelate + H2O = (2S,6S)-2,6-diaminopimelate + succinate. The protein operates within amino-acid biosynthesis; L-lysine biosynthesis via DAP pathway; LL-2,6-diaminopimelate from (S)-tetrahydrodipicolinate (succinylase route): step 3/3. Its function is as follows. Catalyzes the hydrolysis of N-succinyl-L,L-diaminopimelic acid (SDAP), forming succinate and LL-2,6-diaminopimelate (DAP), an intermediate involved in the bacterial biosynthesis of lysine and meso-diaminopimelic acid, an essential component of bacterial cell walls. The protein is Succinyl-diaminopimelate desuccinylase of Burkholderia vietnamiensis (strain G4 / LMG 22486) (Burkholderia cepacia (strain R1808)).